We begin with the raw amino-acid sequence, 146 residues long: MSTTTEILAHHWAFGLFLIIAVGLCVFMLTGGFLLGGRAKGRAKNVPYESGIDSVGSARLRLSAKFYLVAMFFVIFDVEALYLYAWAVSIKESGWIGFIEATIFILVLLAGLIYLVRVGALDWTPVRSKRQVVKSDIINTTNNHPQ.

The next 3 helical transmembrane spans lie at 14-34 (FGLFLIIAVGLCVFMLTGGFL), 68-88 (LVAMFFVIFDVEALYLYAWAV), and 96-116 (IGFIEATIFILVLLAGLIYLV).

The protein belongs to the complex I subunit 3 family. As to quaternary structure, NDH-1 is composed of 13 different subunits. Subunits NuoA, H, J, K, L, M, N constitute the membrane sector of the complex.

It localises to the cell inner membrane. It carries out the reaction a quinone + NADH + 5 H(+)(in) = a quinol + NAD(+) + 4 H(+)(out). Functionally, NDH-1 shuttles electrons from NADH, via FMN and iron-sulfur (Fe-S) centers, to quinones in the respiratory chain. The immediate electron acceptor for the enzyme in this species is believed to be ubiquinone. Couples the redox reaction to proton translocation (for every two electrons transferred, four hydrogen ions are translocated across the cytoplasmic membrane), and thus conserves the redox energy in a proton gradient. The polypeptide is NADH-quinone oxidoreductase subunit A (Pectobacterium carotovorum subsp. carotovorum (Erwinia carotovora subsp. carotovora)).